The following is a 302-amino-acid chain: tRNA-cytidine(32) 2-sulfurtransferase (302 aa).

Positions 44–49 match the PP-loop motif motif; sequence SGGKDS. 3 residues coordinate [4Fe-4S] cluster: Cys119, Cys122, and Cys210.

It belongs to the TtcA family. In terms of assembly, homodimer. Requires Mg(2+) as cofactor. [4Fe-4S] cluster serves as cofactor.

The protein resides in the cytoplasm. It catalyses the reaction cytidine(32) in tRNA + S-sulfanyl-L-cysteinyl-[cysteine desulfurase] + AH2 + ATP = 2-thiocytidine(32) in tRNA + L-cysteinyl-[cysteine desulfurase] + A + AMP + diphosphate + H(+). It participates in tRNA modification. Catalyzes the ATP-dependent 2-thiolation of cytidine in position 32 of tRNA, to form 2-thiocytidine (s(2)C32). The sulfur atoms are provided by the cysteine/cysteine desulfurase (IscS) system. This chain is tRNA-cytidine(32) 2-sulfurtransferase, found in Tolumonas auensis (strain DSM 9187 / NBRC 110442 / TA 4).